A 454-amino-acid polypeptide reads, in one-letter code: GA-binding protein alpha chain (454 aa).

In terms of domain architecture, PNT spans 168–251; sequence AALEGYRKEQ…SHLELLRKYV (84 aa). The disordered stretch occupies residues 297–316; sequence QRAPRISGEDRSSPGNRTGN. Ser303 carries the post-translational modification Phosphoserine. Residues 320–400 constitute a DNA-binding region (ETS); the sequence is IQLWQFLLEL…QGKRFVYKFV (81 aa).

Belongs to the ETS family. In terms of assembly, heterotetramer of two alpha and two beta subunits.

It is found in the nucleus. Functionally, transcription factor capable of interacting with purine rich repeats (GA repeats). Positively regulates transcription of transcriptional repressor RHIT/ZNF205. (Microbial infection) Necessary for the expression of the Adenovirus E4 gene. The sequence is that of GA-binding protein alpha chain (GABPA) from Homo sapiens (Human).